Reading from the N-terminus, the 260-residue chain is Cobalt transport protein CbiM (260 aa).

Residues 1–34 (MKLGESMKKNATLSVKIIAFLGVLIFTVMPVANA) form the signal peptide. Transmembrane regions (helical) follow at residues 39–59 (EGYLSPKWCIIWGILVLPFLI), 77–97 (LLFAMAGAFIFILSALKLPSF), 109–129 (LSTILFGPAITTVLGVIVLLF), 132–152 (LLLAHGGISTLGANSFAMAVM), 175–195 (IFFSATVGDLFTYCITAIQLG), and 215–235 (VFAITQIPIAIAEGILTVLIF).

Belongs to the CbiM family. Forms an energy-coupling factor (ECF) transporter complex composed of an ATP-binding protein (A component, CbiO), a transmembrane protein (T component, CbiQ) and 2 possible substrate-capture proteins (S components, CbiM and CbiN) of unknown stoichimetry.

It localises to the cell membrane. Its pathway is cofactor biosynthesis; adenosylcobalamin biosynthesis. Functionally, part of the energy-coupling factor (ECF) transporter complex CbiMNOQ involved in cobalt import. This chain is Cobalt transport protein CbiM, found in Clostridium cellulovorans (strain ATCC 35296 / DSM 3052 / OCM 3 / 743B).